The chain runs to 548 residues: Rop guanine nucleotide exchange factor 1 (548 aa).

A compositionally biased stretch (acidic residues) spans 1–12 (MGSLSSEEDDEV). Positions 1–38 (MGSLSSEEDDEVSSERCGSYSPSADISESESSSSFSCH) are disordered. Positions 19 to 36 (SYSPSADISESESSSSFS) are enriched in low complexity. The PRONE domain maps to 81-462 (DKQPDNDLSE…DAMRRSISVT (382 aa)). The interval 458–548 (SISVTESLSL…RVTGVTPERD (91 aa)) is involved in auto-inhibition. Residues serine 460 and serine 480 each carry the phosphoserine modification.

As to quaternary structure, interacts with ARAC10/ROP11 and FER. Forms a complex with ARAC11/ROP1 and PRK2. Interacts in vitro (via PRONE domain) with PRK1, PRK2, PRK3 and PRK4. The C-terminal region is also important for the interaction with PRK2. Post-translationally, phosphorylated at Ser-460 and Ser-480 by PRK2. Expressed in roots, cotyledons, leaves, stems, sepals, petals, anthers, pollen grains, stigmas and siliques.

It is found in the cytoplasm. The protein resides in the cytosol. It localises to the cell membrane. Phosphorylation at Ser-460 and Ser-480 by PRK2 releases ROPGEF1 auto-inhibition, thereby activating ROPGEF1, which in turn activates ARAC11/ROP1. Its function is as follows. Guanine-nucleotide exchange factor (GEF) that acts as an activator of Rop (Rho of plants) GTPases by promoting the exchange of GDP for GTP. Acts downstream of PRK2 in the control of polarized pollen tube growth by activating ARAC11/ROP1. In association with ROPGEF4, acts as a specific regulator of ARAC10/ROP11 function in ABA-mediated stomatal closure. May play a role in the Rac/Rop-signaling pathway that controls ROS-mediated root hair development. The chain is Rop guanine nucleotide exchange factor 1 (ROPGEF1) from Arabidopsis thaliana (Mouse-ear cress).